Consider the following 379-residue polypeptide: Homoserine O-acetyltransferase (379 aa).

The AB hydrolase-1 domain occupies 45–355 (NAILILHALT…PHGHDAFLIE (311 aa)). Catalysis depends on Ser-151, which acts as the Nucleophile. Residue Arg-220 coordinates substrate. Residues Asp-316 and His-349 contribute to the active site. Residue Asp-350 participates in substrate binding.

The protein belongs to the AB hydrolase superfamily. MetX family. As to quaternary structure, homodimer.

It localises to the cytoplasm. The catalysed reaction is L-homoserine + acetyl-CoA = O-acetyl-L-homoserine + CoA. The protein operates within amino-acid biosynthesis; L-methionine biosynthesis via de novo pathway; O-acetyl-L-homoserine from L-homoserine: step 1/1. Transfers an acetyl group from acetyl-CoA to L-homoserine, forming acetyl-L-homoserine. This is Homoserine O-acetyltransferase from Carboxydothermus hydrogenoformans (strain ATCC BAA-161 / DSM 6008 / Z-2901).